Consider the following 280-residue polypeptide: ESX-1 secretion-associated protein EspJ (280 aa).

Serine 70 bears the Phosphoserine mark. 2 stretches are compositionally biased toward low complexity: residues 167–181 (QTIS…QSAQ) and 246–280 (PAQA…TTTL). The segment at 167 to 280 (QTISQTAQQA…TPAPSTTTTL (114 aa)) is disordered.

In terms of assembly, residues 76-280 interact with EsxB and an artificial EsxB-EsxA heterodimer. Phosphorylated at Ser-70.

The protein localises to the secreted. Could be involved in regulation of growth and intracellular survival. In Mycobacterium tuberculosis (strain ATCC 25618 / H37Rv), this protein is ESX-1 secretion-associated protein EspJ.